A 443-amino-acid polypeptide reads, in one-letter code: Ribulose bisphosphate carboxylase large chain (443 aa).

Substrate contacts are provided by Asn89 and Thr139. Residue Lys141 is the Proton acceptor of the active site. Lys143 provides a ligand contact to substrate. Residues Lys167, Asp169, and Glu170 each contribute to the Mg(2+) site. Lys167 carries the post-translational modification N6-carboxylysine. His260 (proton acceptor) is an active-site residue. Residues Arg261, His293, and Ser345 each coordinate substrate.

Belongs to the RuBisCO large chain family. Type I subfamily. In terms of assembly, heterohexadecamer of 8 large chains and 8 small chains; disulfide-linked. The disulfide link is formed within the large subunit homodimers. It depends on Mg(2+) as a cofactor. In terms of processing, the disulfide bond which can form in the large chain dimeric partners within the hexadecamer appears to be associated with oxidative stress and protein turnover.

Its subcellular location is the plastid. The protein resides in the chloroplast. It carries out the reaction 2 (2R)-3-phosphoglycerate + 2 H(+) = D-ribulose 1,5-bisphosphate + CO2 + H2O. It catalyses the reaction D-ribulose 1,5-bisphosphate + O2 = 2-phosphoglycolate + (2R)-3-phosphoglycerate + 2 H(+). RuBisCO catalyzes two reactions: the carboxylation of D-ribulose 1,5-bisphosphate, the primary event in carbon dioxide fixation, as well as the oxidative fragmentation of the pentose substrate in the photorespiration process. Both reactions occur simultaneously and in competition at the same active site. The sequence is that of Ribulose bisphosphate carboxylase large chain from Verbena bonariensis (Argentinian vervain).